Reading from the N-terminus, the 117-residue chain is Large ribosomal subunit protein bL20 (117 aa).

The protein belongs to the bacterial ribosomal protein bL20 family.

Its function is as follows. Binds directly to 23S ribosomal RNA and is necessary for the in vitro assembly process of the 50S ribosomal subunit. It is not involved in the protein synthesizing functions of that subunit. The sequence is that of Large ribosomal subunit protein bL20 from Limosilactobacillus fermentum (strain NBRC 3956 / LMG 18251) (Lactobacillus fermentum).